Here is a 337-residue protein sequence, read N- to C-terminus: Mitochondrial uncoupling protein 6 (337 aa).

3 Solcar repeats span residues Lys4–Arg136, Phe145–Ile236, and Gly246–Leu331. 6 helical membrane passes run Phe6–Ile26, Pro105–Thr125, Ile151–Ala171, Arg210–Tyr230, Val252–Val272, and Tyr304–Thr324.

The protein belongs to the mitochondrial carrier (TC 2.A.29) family.

The protein localises to the mitochondrion inner membrane. In terms of biological role, PUMPS are mitochondrial transporter proteins that create proton leaks across the inner mitochondrial membrane, thus uncoupling oxidative phosphorylation. This leads to a decrease in the efficiency of oxidative phosphorylation and an increase in heat production. May be involved in protecting plant cells against oxidative stress damage. Recombinant PUMP6, reconstituted into liposomes, transports a wide range of dicarboxylic acids including malate, oxaloacetate and succinate as well as phosphate, sulfate and thiosulfate. However, it is unknown if these transports are of any biological significance in vivo. This Arabidopsis thaliana (Mouse-ear cress) protein is Mitochondrial uncoupling protein 6 (PUMP6).